Here is a 496-residue protein sequence, read N- to C-terminus: GTPase Der (496 aa).

EngA-type G domains lie at 3–166 (PVVA…FDNL) and 208–381 (IKLA…RSAT). GTP is bound by residues 9-16 (GRPNVGKS), 56-60 (DTGGI), 118-121 (NKVD), 214-221 (GRPNVGKS), 261-265 (DTAGV), and 326-329 (NKWD). The KH-like domain occupies 382–466 (TRVGTSVLTR…PIRIQFQNSD (85 aa)).

It belongs to the TRAFAC class TrmE-Era-EngA-EngB-Septin-like GTPase superfamily. EngA (Der) GTPase family. As to quaternary structure, associates with the 50S ribosomal subunit.

Functionally, GTPase that plays an essential role in the late steps of ribosome biogenesis. In Vibrio vulnificus (strain YJ016), this protein is GTPase Der.